Consider the following 547-residue polypeptide: Dihydroxy-acid dehydratase (547 aa).

D78 is a binding site for Mg(2+). C119 lines the [2Fe-2S] cluster pocket. D120 and K121 together coordinate Mg(2+). Position 121 is an N6-carboxylysine (K121). C191 contributes to the [2Fe-2S] cluster binding site. E439 lines the Mg(2+) pocket. S464 serves as the catalytic Proton acceptor.

Belongs to the IlvD/Edd family. As to quaternary structure, homodimer. [2Fe-2S] cluster serves as cofactor. Mg(2+) is required as a cofactor.

It carries out the reaction (2R)-2,3-dihydroxy-3-methylbutanoate = 3-methyl-2-oxobutanoate + H2O. The enzyme catalyses (2R,3R)-2,3-dihydroxy-3-methylpentanoate = (S)-3-methyl-2-oxopentanoate + H2O. The protein operates within amino-acid biosynthesis; L-isoleucine biosynthesis; L-isoleucine from 2-oxobutanoate: step 3/4. It functions in the pathway amino-acid biosynthesis; L-valine biosynthesis; L-valine from pyruvate: step 3/4. Its function is as follows. Functions in the biosynthesis of branched-chain amino acids. Catalyzes the dehydration of (2R,3R)-2,3-dihydroxy-3-methylpentanoate (2,3-dihydroxy-3-methylvalerate) into 2-oxo-3-methylpentanoate (2-oxo-3-methylvalerate) and of (2R)-2,3-dihydroxy-3-methylbutanoate (2,3-dihydroxyisovalerate) into 2-oxo-3-methylbutanoate (2-oxoisovalerate), the penultimate precursor to L-isoleucine and L-valine, respectively. The sequence is that of Dihydroxy-acid dehydratase from Methanospirillum hungatei JF-1 (strain ATCC 27890 / DSM 864 / NBRC 100397 / JF-1).